The sequence spans 369 residues: Putative esterase slr0264 (369 aa).

Catalysis depends on charge relay system residues Ser-162, Asp-303, and His-334.

Belongs to the AB hydrolase superfamily. AB hydrolase 4 family.

The protein is Putative esterase slr0264 of Synechocystis sp. (strain ATCC 27184 / PCC 6803 / Kazusa).